The sequence spans 657 residues: UvrABC system protein B (657 aa).

Residues 25–182 enclose the Helicase ATP-binding domain; that stretch reads KSIKQGNEFQ…KKLIEIQYER (158 aa). 38–45 serves as a coordination point for ATP; that stretch reads GVTGSGKT. The short motif at 91 to 114 is the Beta-hairpin element; the sequence is YYDYYQPEAYVPQTDTFIEKDASI. One can recognise a Helicase C-terminal domain in the interval 429–595; the sequence is QIDDLYTEIQ…TINKEVRELI (167 aa). The UVR domain occupies 621-656; it reads KKLIKEYTDEMKLAAKNLQFERAAQLRDKIEELKGK.

It belongs to the UvrB family. In terms of assembly, forms a heterotetramer with UvrA during the search for lesions. Interacts with UvrC in an incision complex.

It localises to the cytoplasm. In terms of biological role, the UvrABC repair system catalyzes the recognition and processing of DNA lesions. A damage recognition complex composed of 2 UvrA and 2 UvrB subunits scans DNA for abnormalities. Upon binding of the UvrA(2)B(2) complex to a putative damaged site, the DNA wraps around one UvrB monomer. DNA wrap is dependent on ATP binding by UvrB and probably causes local melting of the DNA helix, facilitating insertion of UvrB beta-hairpin between the DNA strands. Then UvrB probes one DNA strand for the presence of a lesion. If a lesion is found the UvrA subunits dissociate and the UvrB-DNA preincision complex is formed. This complex is subsequently bound by UvrC and the second UvrB is released. If no lesion is found, the DNA wraps around the other UvrB subunit that will check the other stand for damage. The protein is UvrABC system protein B of Clostridium botulinum (strain Eklund 17B / Type B).